We begin with the raw amino-acid sequence, 1017 residues long: Adhesion G-protein coupled receptor G2 (1017 aa).

The first 37 residues, 1–37 (MVFSVRQCGHVGRTEEVLLTFKIFLVIICLHVVLVTS), serve as a signal peptide directing secretion. At 38–627 (LEEDTDNSSL…TSVLPAQMMA (590 aa)) the chain is on the extracellular side. Asn44, Asn85, Asn99, Asn111, Asn117, Asn144, Asn162, Asn186, and Asn194 each carry an N-linked (GlcNAc...) asparagine glycan. Residues 301 to 366 (PLSPQPSAPI…NTTSAPPVQT (66 aa)) are disordered. Over residues 308–320 (APIASSPAIDMPP) the composition is skewed to low complexity. 2 stretches are compositionally biased toward polar residues: residues 321 to 335 (QSETISSPMPQTHVS) and 344 to 366 (SFSSPTVSAPANVNTTSAPPVQT). Residues Asn357, Asn370, Asn435, Asn438, Asn456, Asn461, Asn528, Asn542, Asn547, Asn551, and Asn597 are each glycosylated (N-linked (GlcNAc...) asparagine). The GAIN-B domain maps to 462–619 (TTTFVAQDPA…GVLLDLSRTS (158 aa)). Disulfide bonds link Cys570–Cys601 and Cys589–Cys603. A GPS region spans residues 570-619 (CVFWDLGRNGGRGGWSDNGCSVKDRRLNETICTCSHLTSFGVLLDLSRTS). Positions 608–619 (SFGVLLDLSRTS) are stachel. The chain crosses the membrane as a helical span at residues 628–648 (LTFITYIGCGLSSIFLSVTLV). Residues 649–667 (TYIAFEKIRRDYPSKILIQ) lie on the Cytoplasmic side of the membrane. A helical transmembrane segment spans residues 668–688 (LCAALLLLNLVFLLDSWIALY). Over 689-693 (KMQGL) the chain is Extracellular. Residues 694 to 714 (CISVAVFLHYFLLVSFTWMGL) form a helical membrane-spanning segment. An intrachain disulfide couples Cys694 to Cys778. Residues 715–737 (EAFHMYLALVKVFNTYIRKYILK) are Cytoplasmic-facing. Residues 738 to 758 (FCIVGWGVPAVVVTIILTISP) form a helical membrane-spanning segment. Residues 759 to 789 (DNYGLGSYGKFPNGSPDDFCWINNNAVFYIT) are Extracellular-facing. A helical membrane pass occupies residues 790 to 810 (VVGYFCVIFLLNVSMFIVVLV). The Cytoplasmic segment spans residues 811–834 (QLCRIKKKKQLGAQRKTSIQDLRS). A helical membrane pass occupies residues 835-855 (IAGLTFLLGITWGFAFFAWGP). Topologically, residues 856–857 (VN) are extracellular. An N-linked (GlcNAc...) asparagine glycan is attached at Asn857. The helical transmembrane segment at 858-878 (VTFMYLFAIFNTLQGFFIFIF) threads the bilayer. Asn868 lines the 3beta-hydroxyandrost-5-en-17-one pocket. Residues 879–1017 (YCVAKENVRK…RGSLHFIEQM (139 aa)) lie on the Cytoplasmic side of the membrane. The disordered stretch occupies residues 918-939 (QTVNQGVSSSSNSLQSSSNSTN). At Ser1010 the chain carries Phosphoserine.

This sequence belongs to the G-protein coupled receptor 2 family. Adhesion G-protein coupled receptor (ADGR) subfamily. In terms of assembly, heterodimer of 2 chains generated by proteolytic processing; the large extracellular N-terminal fragment and the membrane-bound C-terminal fragment predominantly remain associated and non-covalently linked. Interacts with CFTR. In terms of processing, proteolytically cleaved into 2 subunits, an extracellular subunit and a seven-transmembrane subunit. Post-translationally, highly glycosylated. Epididymis-specific expression (at protein level). Both subunits are associated with apical membranes of efferent ductule and proximal epididymal duct epithelia. Mainly expressed in the nonciliated principal cells of the proximal excurrent ducts. Specifically over-expressed in Ewing sarcomas but also up-regulated in a number of carcinomas derived from prostate, kidney or lung.

The protein localises to the apical cell membrane. Its activity is regulated as follows. Forms a heterodimer of 2 chains generated by proteolytic processing that remain associated through non-covalent interactions mediated by the GAIN-B domain. In the inactivated receptor, the Stachel sequence (also named stalk) is embedded in the GAIN-B domain, where it adopts a beta-strand conformation. On activation, the Stachel moves into the 7 transmembrane region and adopts a twisted hook-shaped configuration that forms contacts within the receptor, leading to coupling of a G-alpha protein, which activates signaling. The cleaved GAIN-B and N-terminal domains can then dissociate from the rest of the receptor. Deoxycorticosterone (DOC) acts as an antagonist of ADGRG2. Its function is as follows. Adhesion G-protein coupled receptor (aGPCR) for steroid hormones, such as dehydroepiandrosterone (DHEA; also named 3beta-hydroxyandrost-5-en-17-one) and androstenedione. Involved in a signal transduction pathway controlling epididymal function and male fertility. Ligand binding causes a conformation change that triggers signaling via guanine nucleotide-binding proteins (G proteins) and modulates the activity of downstream effectors, such as adenylate cyclase. ADGRG2 is coupled to G(s) G proteins and mediates activation of adenylate cyclase activity. Also able to couple with G(q) G proteins in vitro. Together with CFTR, required to promote fluid reabsorption within efferent ductule. In Homo sapiens (Human), this protein is Adhesion G-protein coupled receptor G2.